Here is a 206-residue protein sequence, read N- to C-terminus: 2-oxoglutarate-dependent dioxygenase iboH (206 aa).

Residues proline 51 to proline 157 enclose the Fe2OG dioxygenase domain. Fe cation-binding residues include histidine 75, aspartate 77, and histidine 134. 2-oxoglutarate is bound at residue arginine 148.

The protein belongs to the iron/ascorbate-dependent oxidoreductase family. It depends on Fe(2+) as a cofactor.

It catalyses the reaction L-glutamate + 2-oxoglutarate + O2 = (3R)-3-hydroxy-L-glutamate + succinate + CO2. Its pathway is secondary metabolite biosynthesis. Functionally, 2-oxoglutarate-dependent dioxygenase; part of the gene cluster that mediates the biosynthesis of the psychoactive metabolites ibotenic acid and muscimol. The first committed step is glutamate hydroxylation by the 2-oxoglutarate-dependent dioxygenase iboH, and the last step is decarboxylation of ibotenic acid to muscimol by the decarboxylase iboD. The order of the intermediate reactions is somewhat ambiguous. IboA likely activates the carboxylic acid at position 5 to introduce an amide bond, and the flavin monooxygenase iboF generates the N-O bond. There are several options for the latter step. One option is that iboF directly hydroxylates the amide nitrogen formed by iboA to produce a hydroxamic acid species. Another option is that iboF hydroxylates an external N-containing compound, whose resulting N-O bond is subsequently introduced into the hydroxyglutamate scaffold. The paralogous PLP-dependent cystathionine gamma-synthase-like enzymes iboG1 and iboG2 are likely involved in substitution of the OH group at position 3 by the O-N moiety. The first cyclic intermediate is most probably tricholomic acid which is likely desaturated to ibotenic acid by the cytochrome P450 monooxygenase iboC. This Amanita muscaria (strain Koide BX008) protein is 2-oxoglutarate-dependent dioxygenase iboH.